The chain runs to 1116 residues: uncharacterized protein (1116 aa).

EF-hand domains lie at 8–43 (EEQT…SGLA), 42–77 (LAPQ…VALA), 166–201 (LSTE…INLL), and 292–327 (LPED…IKLK). EH domains follow at residues 9-106 (EQTA…DSSK), 134-224 (EMTR…AAST), and 259-348 (DLTS…VAPL). Positions 305, 307, 309, 311, and 316 each coordinate Ca(2+). 7 disordered regions span residues 360–454 (PSVV…NSPT), 703–774 (SVNL…ASTV), 812–890 (TSLS…NTSA), 909–978 (PFAT…SPQI), 1004–1024 (TTTH…ENQY), 1044–1066 (SNEV…DDEL), and 1095–1116 (QAAE…AGHH). The segment covering 371–381 (NPNPTLAPNPT) has biased composition (pro residues). Polar residues predominate over residues 401–416 (FSPTLAPQHTSSNATK). Residues 565–707 (KAQTEQVNRE…EDGLKSVNLT (143 aa)) are a coiled coil. Over residues 723 to 749 (SFTSNGITTDKPTLPDTTSSVPTQHNS) the composition is skewed to polar residues. Composition is skewed to low complexity over residues 755 to 774 (NTLR…ASTV) and 812 to 827 (TSLS…SLDS). Over residues 864-890 (SKLTGSARNTAEPVENTSAEPIENTSA) the composition is skewed to polar residues. Acidic residues predominate over residues 957 to 969 (EIDDDESSSDEEP). Acidic residues-rich tracts occupy residues 1055–1066 (TANESDNDDDEL) and 1104–1116 (NSST…AGHH).

It localises to the cytoplasm. Its subcellular location is the cytoskeleton. This is an uncharacterized protein from Schizosaccharomyces pombe (strain 972 / ATCC 24843) (Fission yeast).